The chain runs to 357 residues: Histidinol-phosphate aminotransferase (357 aa).

K212 bears the N6-(pyridoxal phosphate)lysine mark.

This sequence belongs to the class-II pyridoxal-phosphate-dependent aminotransferase family. Histidinol-phosphate aminotransferase subfamily. As to quaternary structure, homodimer. Pyridoxal 5'-phosphate is required as a cofactor.

The catalysed reaction is L-histidinol phosphate + 2-oxoglutarate = 3-(imidazol-4-yl)-2-oxopropyl phosphate + L-glutamate. The protein operates within amino-acid biosynthesis; L-histidine biosynthesis; L-histidine from 5-phospho-alpha-D-ribose 1-diphosphate: step 7/9. In Pectobacterium atrosepticum (strain SCRI 1043 / ATCC BAA-672) (Erwinia carotovora subsp. atroseptica), this protein is Histidinol-phosphate aminotransferase.